Here is a 278-residue protein sequence, read N- to C-terminus: Urease accessory protein UreD (278 aa).

It belongs to the UreD family. UreD, UreF and UreG form a complex that acts as a GTP-hydrolysis-dependent molecular chaperone, activating the urease apoprotein by helping to assemble the nickel containing metallocenter of UreC. The UreE protein probably delivers the nickel.

It is found in the cytoplasm. Required for maturation of urease via the functional incorporation of the urease nickel metallocenter. The polypeptide is Urease accessory protein UreD (Staphylococcus epidermidis (strain ATCC 12228 / FDA PCI 1200)).